A 228-amino-acid chain; its full sequence is Uridylate kinase (228 aa).

ATP is bound at residue 9–10 (GS). G44 provides a ligand contact to UMP. ATP is bound by residues G45 and R49. Residues D66 and 114 to 120 (IVAAQTT) contribute to the UMP site. 3 residues coordinate ATP: T140, Y146, and D149.

This sequence belongs to the UMP kinase family. In terms of assembly, homohexamer.

It localises to the cytoplasm. It carries out the reaction UMP + ATP = UDP + ADP. It functions in the pathway pyrimidine metabolism; CTP biosynthesis via de novo pathway; UDP from UMP (UMPK route): step 1/1. Inhibited by UTP. In terms of biological role, catalyzes the reversible phosphorylation of UMP to UDP. The protein is Uridylate kinase of Haloarcula marismortui (strain ATCC 43049 / DSM 3752 / JCM 8966 / VKM B-1809) (Halobacterium marismortui).